Reading from the N-terminus, the 384-residue chain is S-adenosylmethionine synthase (384 aa).

Residue H15 coordinates ATP. Position 17 (D17) interacts with Mg(2+). K(+) is bound at residue E43. Residues E56 and Q99 each coordinate L-methionine. The tract at residues 99 to 109 (QSPDINQGVDK) is flexible loop. Residues 164-166 (DAK), 230-231 (RF), D239, 245-246 (RK), A262, and K266 contribute to the ATP site. An L-methionine-binding site is contributed by D239. K270 lines the L-methionine pocket.

It belongs to the AdoMet synthase family. Homotetramer; dimer of dimers. The cofactor is Mg(2+). It depends on K(+) as a cofactor.

Its subcellular location is the cytoplasm. The catalysed reaction is L-methionine + ATP + H2O = S-adenosyl-L-methionine + phosphate + diphosphate. It participates in amino-acid biosynthesis; S-adenosyl-L-methionine biosynthesis; S-adenosyl-L-methionine from L-methionine: step 1/1. Its function is as follows. Catalyzes the formation of S-adenosylmethionine (AdoMet) from methionine and ATP. The overall synthetic reaction is composed of two sequential steps, AdoMet formation and the subsequent tripolyphosphate hydrolysis which occurs prior to release of AdoMet from the enzyme. The chain is S-adenosylmethionine synthase from Vibrio vulnificus (strain YJ016).